The chain runs to 219 residues: Probable nicotinate-nucleotide adenylyltransferase (219 aa).

Belongs to the NadD family.

The enzyme catalyses nicotinate beta-D-ribonucleotide + ATP + H(+) = deamido-NAD(+) + diphosphate. Its pathway is cofactor biosynthesis; NAD(+) biosynthesis; deamido-NAD(+) from nicotinate D-ribonucleotide: step 1/1. Functionally, catalyzes the reversible adenylation of nicotinate mononucleotide (NaMN) to nicotinic acid adenine dinucleotide (NaAD). The protein is Probable nicotinate-nucleotide adenylyltransferase of Pseudomonas entomophila (strain L48).